The chain runs to 98 residues: Cystatin-B (98 aa).

The residue at position 1 (Met1) is an N-acetylmethionine. The short motif at 46 to 50 (QVVAG) is the Secondary area of contact element.

Belongs to the cystatin family. Able to form dimers stabilized by noncovalent forces.

It localises to the cytoplasm. The protein resides in the nucleus. Functionally, this is an intracellular thiol proteinase inhibitor. Tightly binding reversible inhibitor of cathepsins L, H and B. This is Cystatin-B (CSTB) from Pan troglodytes (Chimpanzee).